The following is an 844-amino-acid chain: Janus kinase and microtubule-interacting protein 3 (844 aa).

A coiled-coil region spans residues S8–R258. Positions L250 to K290 are disordered. Positions R254 to P268 are enriched in basic and acidic residues. Over residues H269 to S282 the composition is skewed to low complexity. The stretch at E289–A421 forms a coiled coil. Residue S384 is modified to Phosphoserine. Over residues S466–C483 the composition is skewed to polar residues. The interval S466–L489 is disordered. Coiled coils occupy residues M493–K621 and V683–L834.

This sequence belongs to the JAKMIP family. As to expression, specifically expressed in the CNS and endocrine tissues. Also detected in other tissues including heart, testis and prostate.

It localises to the golgi apparatus. The chain is Janus kinase and microtubule-interacting protein 3 (JAKMIP3) from Homo sapiens (Human).